Here is a 363-residue protein sequence, read N- to C-terminus: GTPase Obg (363 aa).

Residues 1 to 159 (MKFLDEAKVY…KTIWLRLKLI (159 aa)) enclose the Obg domain. The region spanning 160-327 (ADAGLVGLPN…VLRALRDIIV (168 aa)) is the OBG-type G domain. Residues 166-173 (GLPNAGKS), 191-195 (FTTLH), 212-215 (DIPG), 279-282 (SQID), and 308-310 (SAV) each bind GTP. Mg(2+)-binding residues include Ser-173 and Thr-193. The disordered stretch occupies residues 332–363 (EEKPAKAPKLRHRDMIVSEENNQGEDGADDQP). The segment covering 353-363 (NQGEDGADDQP) has biased composition (acidic residues).

Belongs to the TRAFAC class OBG-HflX-like GTPase superfamily. OBG GTPase family. Monomer. Mg(2+) serves as cofactor.

The protein resides in the cytoplasm. An essential GTPase which binds GTP, GDP and possibly (p)ppGpp with moderate affinity, with high nucleotide exchange rates and a fairly low GTP hydrolysis rate. Plays a role in control of the cell cycle, stress response, ribosome biogenesis and in those bacteria that undergo differentiation, in morphogenesis control. This Rhizobium etli (strain ATCC 51251 / DSM 11541 / JCM 21823 / NBRC 15573 / CFN 42) protein is GTPase Obg.